The chain runs to 276 residues: Natural cytotoxicity triggering receptor 2 (276 aa).

An N-terminal signal peptide occupies residues 1-21 (MAWRALHPLLLLLLLFPGSQA). The region spanning 22-120 (QSKAQVLQSV…IYRPSDNSVS (99 aa)) is the Ig-like domain. Over 22–192 (QSKAQVLQSV…LRPGPAAPIA (171 aa)) the chain is Extracellular. Cystine bridges form between Cys-40/Cys-109 and Cys-55/Cys-63. 2 stretches are compositionally biased toward polar residues: residues 138-156 (TSWTPRDLVSSQTQTQSCV) and 167-183 (ESPSTIPVPSQPQNSTL). The disordered stretch occupies residues 138–184 (TSWTPRDLVSSQTQTQSCVPPTAGARQAPESPSTIPVPSQPQNSTLR). Asn-180 is a glycosylation site (N-linked (GlcNAc...) asparagine). Residues 193-213 (LVPVFCGLLVAKSLVLSALLV) traverse the membrane as a helical segment. At 214–276 (WWGDIWWKTM…ISDDDDEHTL (63 aa)) the chain is on the cytoplasmic side.

Belongs to the natural cytotoxicity receptor (NCR) family. As to quaternary structure, interacts with TYROBP/DAP12. Interacts with KMT2E isoform NKp44L. As to expression, selectively expressed by activated NK cells and by in vitro cultured (i.e. activated) TCRg/d lymphoid cells.

The protein resides in the cell membrane. Functionally, cytotoxicity-activating receptor that may contribute to the increased efficiency of activated natural killer (NK) cells to mediate tumor cell lysis. The polypeptide is Natural cytotoxicity triggering receptor 2 (NCR2) (Homo sapiens (Human)).